Consider the following 734-residue polypeptide: Photosystem I P700 chlorophyll a apoprotein A2 (734 aa).

8 helical membrane-spanning segments follow: residues Ile-46 to Ala-69, Leu-135 to Gln-158, Leu-175 to Ile-199, Met-273 to Tyr-291, Leu-330 to Tyr-353, Ala-369 to Ile-395, Ala-417 to His-439, and Phe-517 to Val-535. Cys-559 and Cys-568 together coordinate [4Fe-4S] cluster. Helical transmembrane passes span Ala-575–Trp-596 and Leu-643–Ile-665. Chlorophyll a contacts are provided by His-654, Met-662, and Tyr-670. Trp-671 lines the phylloquinone pocket. Residues Leu-707–Ala-727 traverse the membrane as a helical segment.

This sequence belongs to the PsaA/PsaB family. In terms of assembly, the PsaA/B heterodimer binds the P700 chlorophyll special pair and subsequent electron acceptors. PSI consists of a core antenna complex that captures photons, and an electron transfer chain that converts photonic excitation into a charge separation. The eukaryotic PSI reaction center is composed of at least 11 subunits. P700 is a chlorophyll a/chlorophyll a' dimer, A0 is one or more chlorophyll a, A1 is one or both phylloquinones and FX is a shared 4Fe-4S iron-sulfur center. serves as cofactor.

The protein resides in the plastid. It is found in the chloroplast thylakoid membrane. The enzyme catalyses reduced [plastocyanin] + hnu + oxidized [2Fe-2S]-[ferredoxin] = oxidized [plastocyanin] + reduced [2Fe-2S]-[ferredoxin]. In terms of biological role, psaA and PsaB bind P700, the primary electron donor of photosystem I (PSI), as well as the electron acceptors A0, A1 and FX. PSI is a plastocyanin-ferredoxin oxidoreductase, converting photonic excitation into a charge separation, which transfers an electron from the donor P700 chlorophyll pair to the spectroscopically characterized acceptors A0, A1, FX, FA and FB in turn. Oxidized P700 is reduced on the lumenal side of the thylakoid membrane by plastocyanin. This chain is Photosystem I P700 chlorophyll a apoprotein A2, found in Cucumis sativus (Cucumber).